A 129-amino-acid chain; its full sequence is Small ribosomal subunit protein uS12 (129 aa).

Asp89 is modified (3-methylthioaspartic acid).

Belongs to the universal ribosomal protein uS12 family. Part of the 30S ribosomal subunit. Contacts proteins S8 and S17. May interact with IF1 in the 30S initiation complex.

Functionally, with S4 and S5 plays an important role in translational accuracy. Its function is as follows. Interacts with and stabilizes bases of the 16S rRNA that are involved in tRNA selection in the A site and with the mRNA backbone. Located at the interface of the 30S and 50S subunits, it traverses the body of the 30S subunit contacting proteins on the other side and probably holding the rRNA structure together. The combined cluster of proteins S8, S12 and S17 appears to hold together the shoulder and platform of the 30S subunit. The chain is Small ribosomal subunit protein uS12 from Rickettsia akari (strain Hartford).